We begin with the raw amino-acid sequence, 148 residues long: Glyoxalase domain-containing protein 5 (148 aa).

The region spanning 25–145 (RLDHIVMTVK…DRNLLEVSSY (121 aa)) is the VOC domain.

This sequence belongs to the glyoxalase I family.

The sequence is that of Glyoxalase domain-containing protein 5 (Glod5) from Mus musculus (Mouse).